Consider the following 481-residue polypeptide: Pre-mRNA-splicing factor sap114 (481 aa).

Polar residues predominate over residues Met1–Asn15. Residues Met1–Val34 form a disordered region. SURP motif repeat units lie at residues Ile44 to Tyr86 and Val147 to Phe189. Disordered regions lie at residues Pro335–Val373 and Gly452–Arg481. 2 stretches are compositionally biased toward polar residues: residues Ile345–Lys368 and Ala467–Arg481.

Belongs to the 40S cdc5-associated complex (or cwf complex), a spliceosome sub-complex reminiscent of a late-stage spliceosome composed of the U2, U5 and U6 snRNAs and at least brr2, cdc5, cwf2/prp3, cwf3/syf1, cwf4/syf3, cwf5/ecm2, spp42/cwf6, cwf7/spf27, cwf8, cwf9, cwf10, cwf11, cwf12, prp45/cwf13, cwf14, cwf15, cwf16, cwf17, cwf18, cwf19, cwf20, cwf21, cwf22, cwf23, cwf24, cwf25, cwf26, cyp7/cwf27, cwf28, cwf29/ist3, lea1, msl1, prp5/cwf1, prp10, prp12/sap130, prp17, prp22, sap61, sap62, sap114, sap145, slu7, smb1, smd1, smd3, smf1, smg1 and syf2.

It is found in the nucleus. Functionally, involved in pre-mRNA splicing. May be involved in endoplasmic reticulum-associated protein degradation (ERAD) and required for growth at low and high temperatures. This is Pre-mRNA-splicing factor sap114 (sap114) from Schizosaccharomyces pombe (strain 972 / ATCC 24843) (Fission yeast).